The sequence spans 944 residues: MNKKHGFSLTLTALAIAAAFPSYAANPETAASDAAQSQSLKEITVRAAKVGRRSKEATGLGKIVKTSETLNKEQVLGIRDLTRYDPGVAVVEQGNGASGGYSIRGVDKNRVAVSVDGVAQIQAFTVQGSLSGYGGRGGSGAINEIEYENISTVEIDKGAGSSDHGSGALGGAVAFRTKEAADLISDGKSWGIQAKTAYGSKNRQFMKSLGAGFSKDGWEGLLIRTERQGRETRPHGDIADGVEYGIDRLDAFRQTYDIQKQNKKAEYFLAEGEREPKPVAKLAGNGNYLKNQLNRWVEERKKNNQPLNAEEEAMVREAQARHENLSAQSYTGGGRILPDPMDYRSGSWLAKLGYRFGGRHYVGGVFEDTKQRYDIRDMTEKQYYGTDEAKKFSNKSGVYDGNDFRDGLYFVPNIEEWKGDTNLVKGIGLKYSRTKFIDEHHRRRRMGLLYRYENEAYSDNWADKAVLSFDKQGVATDNNTLKLNCAVYPAVDKSCRASADKPYSYDSSDRFHYREQHNVLNASFEKSLKNKWTKHHLTLGFGYDASKAISRPEQLSHNAARISESTGFDDNNQDKYLLGKPEVVEGSVCGYIETLRSRKCVPRKINGSNIHISLNDRFSIGKYFDFSLGGRYDRQNFTTSEELVRSGRYVDRSWNSGIVFKPNRHFSVSYRASSGFRTPSFQELFGIDIYHDYPKGWQRPALKSEKAANREIGLQWKGDFGFLEISSFRNRYTDMIAVADHKTQLPDSTGRLTEIDIRDYYNAQNMSLQGVNILGKIDWNGVYGKLPEGLYTTLAYNRIKPKSVSNRPDLSLRSYALDAVQPSRYVLGFGYDQPEGKWGANIMLTYSKGKNPDELAYLAGDQKRYSTKRASSSWSTADVSAYLNLKKRLTLRAAIYNIGNYRYVTWESLRQTAESTANRHGGDSNYGRYAAPGRNFSLALEMKF.

Residues 1–27 form the signal peptide; the sequence is MNKKHGFSLTLTALAIAAAFPSYAANP. One can recognise a TBDR plug domain in the interval 52–178; the sequence is RRSKEATGLG…LGGAVAFRTK (127 aa). One can recognise a TBDR beta-barrel domain in the interval 189 to 944; it reads SWGIQAKTAY…NFSLALEMKF (756 aa). A TonB C-terminal box motif is present at residues 927-944; that stretch reads GRYAAPGRNFSLALEMKF.

The protein belongs to the TonB-dependent receptor family.

It is found in the cell outer membrane. Functionally, unknown. May be an iron-siderophore receptor. The chain is Lactoferrin-binding protein A (lbpA) from Neisseria meningitidis serogroup A / serotype 4A (strain DSM 15465 / Z2491).